A 377-amino-acid polypeptide reads, in one-letter code: N-acetyldiaminopimelate deacetylase (377 aa).

Residue Asp69 is part of the active site. Catalysis depends on Glu128, which acts as the Proton acceptor.

This sequence belongs to the peptidase M20A family. N-acetyldiaminopimelate deacetylase subfamily.

The enzyme catalyses N-acetyl-(2S,6S)-2,6-diaminopimelate + H2O = (2S,6S)-2,6-diaminopimelate + acetate. The protein operates within amino-acid biosynthesis; L-lysine biosynthesis via DAP pathway; LL-2,6-diaminopimelate from (S)-tetrahydrodipicolinate (acetylase route): step 3/3. Catalyzes the conversion of N-acetyl-diaminopimelate to diaminopimelate and acetate. This chain is N-acetyldiaminopimelate deacetylase, found in Streptococcus sanguinis (strain SK36).